Here is a 659-residue protein sequence, read N- to C-terminus: DNA ligase (659 aa).

Residues 32–36 (DFEYD), 81–82 (SL), and E111 each bind NAD(+). The active-site N6-AMP-lysine intermediate is the K113. NAD(+) is bound by residues R134, E168, K280, and K304. Positions 398, 401, 416, and 421 each coordinate Zn(2+). Positions 585 to 655 (ETNSIYFQKR…KELNIPIINE (71 aa)) constitute a BRCT domain.

This sequence belongs to the NAD-dependent DNA ligase family. LigA subfamily. Requires Mg(2+) as cofactor. Mn(2+) serves as cofactor.

The enzyme catalyses NAD(+) + (deoxyribonucleotide)n-3'-hydroxyl + 5'-phospho-(deoxyribonucleotide)m = (deoxyribonucleotide)n+m + AMP + beta-nicotinamide D-nucleotide.. Its function is as follows. DNA ligase that catalyzes the formation of phosphodiester linkages between 5'-phosphoryl and 3'-hydroxyl groups in double-stranded DNA using NAD as a coenzyme and as the energy source for the reaction. It is essential for DNA replication and repair of damaged DNA. The protein is DNA ligase of Mycoplasma genitalium (strain ATCC 33530 / DSM 19775 / NCTC 10195 / G37) (Mycoplasmoides genitalium).